Here is a 504-residue protein sequence, read N- to C-terminus: Sugar transport protein 14 (504 aa).

The Cytoplasmic portion of the chain corresponds to 1–25 (MAGGALTDEGGLKRAHLYEHRITSY). 12 consecutive transmembrane segments (helical) span residues 26–46 (FIFA…DLGV), 84–104 (ILTL…FGAS), 121–141 (VSFF…MLIL), 144–164 (IFLG…LSEM), 171–191 (GTVN…ANLI), 205–225 (LSLG…LVLP), 286–308 (LVIG…ILFY), 315–337 (SLGF…LVVA), 352–372 (FLLL…GVTL), 382–402 (LPKS…LAYG), 428–448 (VVVC…LVSL), and 454–474 (GIFL…YFLL). Over 475-504 (PETKQVPIEEVYLLWRQHWLWKKYVEDVDE) the chain is Cytoplasmic.

The protein belongs to the major facilitator superfamily. Sugar transporter (TC 2.A.1.1) family.

The protein resides in the membrane. Functionally, mediates an active uptake of hexoses, probably by sugar/hydrogen symport. This chain is Sugar transport protein 14 (STP14), found in Arabidopsis thaliana (Mouse-ear cress).